The following is a 926-amino-acid chain: Neurofilament medium polypeptide (926 aa).

A compositionally biased stretch (polar residues) spans 1–10 (MSYTLDSLGN). Disordered regions lie at residues 1–51 (MSYT…VSSS) and 79–102 (QSSS…SNEK). Serine 2 bears the N-acetylserine mark. The tract at residues 2 to 104 (SYTLDSLGNP…KLSRSNEKEQ (103 aa)) is head. Low complexity predominate over residues 21 to 44 (RSSFSRISGSPSSGFRSQSWSRGS). Serine 30 carries the post-translational modification Phosphoserine. Residue arginine 42 is modified to Omega-N-methylarginine. Threonine 47 carries O-linked (GlcNAc) threonine glycosylation. Serine 99 carries the post-translational modification Phosphoserine. One can recognise an IF rod domain in the interval 101-412 (EKEQIQGLND…KLLEGEETRF (312 aa)). Residues 105-136 (IQGLNDRFAGYIEKVHYLEQQNKEIEAEIQAL) are coil 1A. The segment at 137 to 149 (RQKQASHAQLGDA) is linker 1. A coil 1B region spans residues 150–248 (YDQEIRELRA…EEEVADLLAQ (99 aa)). Serine 226 is modified (phosphoserine). Residues 249–265 (IQASHITVERKDYLKTD) are linker 12. The coil 2A stretch occupies residues 266–287 (ISTALKEIRSQLESHSDQNMHQ). The interval 288–291 (AEEW) is linker 2. The tract at residues 292-412 (FKCRYAKLTE…KLLEGEETRF (121 aa)) is coil 2B. A Phosphotyrosine modification is found at tyrosine 320. Phosphoserine is present on residues serine 346, serine 418, serine 430, serine 468, and serine 484. A tail region spans residues 413-926 (STFAGSITGP…AIVKEVTQSD (514 aa)). The tract at residues 487–860 (EEVKEEEAEE…EKKGGDKSEE (374 aa)) is disordered. Positions 490–507 (KEEEAEEKEEKEEAEEEV) are enriched in acidic residues. Repeat unit 1 spans residues 512–516 (KSPVK). The 17 X 5 AA approximate tandem repeats of K-S-P-[TVEA]-[AKETP] stretch occupies residues 512–698 (KSPVKATAPE…KSPAPKSPVE (187 aa)). Position 513 is a phosphoserine (serine 513). The segment covering 523 to 543 (KEEEGEKEEEEGQEEEEEEEE) has biased composition (acidic residues). The span at 544–563 (AAKSDQAEEGGSEKEGSSEK) shows a compositional bias: basic and acidic residues. A phosphoserine mark is found at serine 547, serine 555, serine 560, and serine 561. Over residues 564–584 (EEGEQEEEGETEAEGEGEEAA) the composition is skewed to acidic residues. Position 574 is a phosphothreonine (threonine 574). Basic and acidic residues predominate over residues 585-619 (AEAKEEKKMEEKAEEVAPKEELAAEAKVEKPEKAK). Tandem repeats lie at residues 619–623 (KSPVA), 624–628 (KSPTT), 629–633 (KSPTA), 634–638 (KSPEA), 639–643 (KSPEA), 644–648 (KSPTA), 649–653 (KSPTA), 654–658 (KSPVA), 659–663 (KSPTA), 664–668 (KSPEA), 669–673 (KSPEA), 674–678 (KSPTA), 679–683 (KSPTA), 684–688 (KSPAA), 689–693 (KSPAP), and 694–698 (KSPVE). A Phosphothreonine modification is found at threonine 628. Serine 630, serine 635, and serine 640 each carry phosphoserine. Threonine 647 bears the Phosphothreonine mark. A phosphoserine mark is found at serine 650 and serine 655. Phosphoserine occurs at positions 665 and 670. A compositionally biased stretch (low complexity) spans 673 to 692 (AKSPTAKSPTAKSPAAKSPA). Residue threonine 677 is modified to Phosphothreonine. Phosphoserine occurs at positions 680, 685, 690, 695, 727, 751, 757, 771, 831, and 847. 3 stretches are compositionally biased toward basic and acidic residues: residues 696 to 764 (PVEE…EEVP), 771 to 811 (SPEK…KEDI), and 826 to 838 (TKEK…EEKG). A compositionally biased stretch (basic and acidic residues) spans 849–860 (GDEKKGGDKSEE).

As to quaternary structure, forms heterodimers with NEFL; which can further hetero-oligomerize (in vitro). Forms heterodimers with INA (in vitro). Post-translationally, phosphorylated on a number of serine residues in the repeated K-S-P tripeptide motif. Phosphorylation of NFH may result in the formation of interfilament cross-links that are important in the maintenance of axonal caliber. In terms of processing, phosphorylation seems to play a major role in the functioning of the larger neurofilament polypeptides (NF-M and NF-H), the levels of phosphorylation being altered developmentally and coincidentally with a change in the neurofilament function. Phosphorylated in the head and rod regions by the PKC kinase PKN1, leading to the inhibition of polymerization.

Its subcellular location is the cytoplasm. The protein localises to the cytoskeleton. The protein resides in the cell projection. It localises to the axon. Neurofilaments usually contain three intermediate filament proteins: NEFL, NEFM, and NEFH which are involved in the maintenance of neuronal caliber. May additionally cooperate with the neuronal intermediate filament proteins PRPH and INA to form neuronal filamentous networks. This chain is Neurofilament medium polypeptide (NEFM), found in Bos taurus (Bovine).